The chain runs to 233 residues: tRNA (guanine-N(7)-)-methyltransferase (233 aa).

4 residues coordinate S-adenosyl-L-methionine: E62, E87, D116, and D138. D138 is a catalytic residue. Residues K142, D174, and 212–215 (TRYE) contribute to the substrate site.

It belongs to the class I-like SAM-binding methyltransferase superfamily. TrmB family.

The enzyme catalyses guanosine(46) in tRNA + S-adenosyl-L-methionine = N(7)-methylguanosine(46) in tRNA + S-adenosyl-L-homocysteine. The protein operates within tRNA modification; N(7)-methylguanine-tRNA biosynthesis. Catalyzes the formation of N(7)-methylguanine at position 46 (m7G46) in tRNA. The polypeptide is tRNA (guanine-N(7)-)-methyltransferase (Bartonella quintana (strain Toulouse) (Rochalimaea quintana)).